Here is a 664-residue protein sequence, read N- to C-terminus: uncharacterized protein (664 aa).

This is an uncharacterized protein from Mycoplasma pneumoniae (strain ATCC 29342 / M129 / Subtype 1) (Mycoplasmoides pneumoniae).